The sequence spans 125 residues: Small ribosomal subunit protein uS12m (125 aa).

The disordered stretch occupies residues 1–26 (MPTINQLLRKKSSRQAPKLKSKKPAL). Residues 8-23 (LRKKSSRQAPKLKSKK) show a composition bias toward basic residues.

It belongs to the universal ribosomal protein uS12 family.

It localises to the mitochondrion. The sequence is that of Small ribosomal subunit protein uS12m (RPS12) from Prototheca wickerhamii.